The primary structure comprises 907 residues: MITKLLTKVIGSRNDRTLRRLRKIVKEINNYEPTFEALSDEQLKAKTVEFRQRLEQGETLDQLLPEAFATVREASKRVYGMRHFDVQLIGGMVLNAGQIAEMRTGEGKTLTATLPAYLNALAGKGVHIVTVNDYLAKRDAETNRPLFEFLGMTVGINVPNMPHPAKKEAYQADILYGTNNEFGFDYLRDNMAFRNEDRVQRERFFAVVDEVDSILIDEARTPLIISGPAEDSSELYTRINALIPLLQKQDKEDSEEYRGDGHYTVDEKSKQVHLTETGQEFVEELMVKNGLMEEGDTLYSPTNISLLHHVNAALRAHVLFEKNVDYIVNEDGEVVIVDEHTGRTMPGRRWSEGLHQAVEAKEGVKIQNENQTLASITFQNYFRLYEKLSGMTGTADTEAFEFQSIYGLETVVIPTNKPMIRNDMPDVVYRTEAEKFAAIIEDIKARVEKGQPVLVGTVSIEKSELLSNALKKAKIKHNVLNAKFHEKEAEIVAEAGKPGAVTIATNMAGRGTDIVLGGSWQAKVESMANPTQEQIDEIKAEWKLVHDQVLESGGLHIIGTERHESRRIDNQLRGRSGRQGDAGSSRFYLSMEDSLLRIFTSDRMAALIQSGMEEGEAIESKMLSRSIEKAQRKVEGRNFDIRKQLLEYDDVANDQRKVVYELRDELMSVDDISDMIEHNRVDVLQGVIDEYIPPQSLEDMWDLEGLQERLKNDFDIDAPVKQWLEEDDKLYEEALREKVIDTAVEVYKAKEEVVGAQVLRNFEKSVMLQTLDTLWKEHLAAMDHLRQGIHLRGYAQKNPKQEYKRESFELFEGLLETLKSDVVMILSKVRVQQQEEVERMEAQRRAQAEEAARRAQAQHASAQSQLADDSDEGHHQPVVRDERKVGRNEPCPCGSGKKYKQCHGQIN.

ATP contacts are provided by residues Gln87, 105-109 (GEGKT), and Asp513. Residues 841-853 (EAQRRAQAEEAAR) are compositionally biased toward basic and acidic residues. The interval 841 to 907 (EAQRRAQAEE…KYKQCHGQIN (67 aa)) is disordered. Residues 854–865 (RAQAQHASAQSQ) are compositionally biased toward low complexity. Over residues 872 to 887 (EGHHQPVVRDERKVGR) the composition is skewed to basic and acidic residues. Zn(2+) contacts are provided by Cys891, Cys893, Cys902, and His903.

Belongs to the SecA family. In terms of assembly, monomer and homodimer. Part of the essential Sec protein translocation apparatus which comprises SecA, SecYEG and auxiliary proteins SecDF-YajC and YidC. Zn(2+) serves as cofactor.

Its subcellular location is the cell inner membrane. The protein localises to the cytoplasm. It catalyses the reaction ATP + H2O + cellular proteinSide 1 = ADP + phosphate + cellular proteinSide 2.. Its function is as follows. Part of the Sec protein translocase complex. Interacts with the SecYEG preprotein conducting channel. Has a central role in coupling the hydrolysis of ATP to the transfer of proteins into and across the cell membrane, serving both as a receptor for the preprotein-SecB complex and as an ATP-driven molecular motor driving the stepwise translocation of polypeptide chains across the membrane. This Vibrio vulnificus (strain YJ016) protein is Protein translocase subunit SecA.